A 112-amino-acid chain; its full sequence is UPF0212 protein Mboo_1659 (112 aa).

The protein belongs to the UPF0212 family.

This is UPF0212 protein Mboo_1659 from Methanoregula boonei (strain DSM 21154 / JCM 14090 / 6A8).